The primary structure comprises 218 residues: Tubulin polymerization-promoting protein (218 aa).

Residues 1-45 (MADSKAKPTKAANKTPPKSPGDPAKAAKRLSLESEGANEGAAAAP) form a disordered region. A mediates interaction with LIMK1 region spans residues 2–115 (ADSKAKPTKA…SCRTITFEQF (114 aa)). T15 bears the Phosphothreonine mark. Phosphoserine is present on residues S19, S31, and S34. A compositionally biased stretch (low complexity) spans 33-45 (ESEGANEGAAAAP). Zn(2+) is bound by residues H60, H71, C79, and C82. T91 bears the Phosphothreonine mark. S106 is modified (phosphoserine). S151 carries an O-linked (GlcNAc) serine glycan. Phosphoserine occurs at positions 158 and 159. Residues 165 to 192 (LTDTSKFTGSHKERFDQSGKGKGKAGRV) form a disordered region. Positions 174–183 (SHKERFDQSG) are enriched in basic and acidic residues.

This sequence belongs to the TPPP family. Homodimer. Binds tubulin; binding is inhibited by GTP. Interacts with MAPK1. Interacts with GAPDH; the interaction is direct. Interacts with LIMK1 (via the PDZ domain); the interaction is direct. Interacts with LIMK2. Interacts with HDAC6; thereby inhibiting the tubulin deacetylase activity of HDAC6. Interacts with aggregated SNCA; may have a pro-aggregatory role in synucleinopathies. Interacts with DYNLL1. Interacts (via C-terminus) with S100A2, S100A6 and S100B; these interactions inhibit TPPP dimerization. The cofactor is Mg(2+). Post-translationally, phosphorylated by LIMK1 on serine residues; phosphorylation may alter the tubulin polymerization activity. Phosphorylation by LIMK2, but not LIMK1, regulates astral microtubule organization at early stage of mitosis. Phosphorylation by ROCK1 at Ser-31, Ser-106 and Ser-158 inhibits interaction with HDAC6, resulting in decreased acetylation of tubulin, increased cell motility and entry into S-phase. Phosphorylation by CDK1 inhibits the microtubule polymerizing activity. Degraded by the proteasome; zinc-binding inhibits degradation by the proteasome. Predominantly expressed in mature oligodendrocytes.

The protein localises to the golgi outpost. Its subcellular location is the cytoplasm. It is found in the cytoskeleton. The protein resides in the microtubule organizing center. It localises to the nucleus. The protein localises to the spindle. It catalyses the reaction GTP + H2O = GDP + phosphate + H(+). In terms of biological role, regulator of microtubule dynamics that plays a key role in myelination by promoting elongation of the myelin sheath. Acts as a microtubule nucleation factor in oligodendrocytes: specifically localizes to the postsynaptic Golgi apparatus region, also named Golgi outpost, and promotes microtubule nucleation, an important step for elongation of the myelin sheath. Required for both uniform polarized growth of distal microtubules as well as directing the branching of proximal processes. Shows magnesium-dependent GTPase activity; the role of the GTPase activity is unclear. In addition to microtubule nucleation activity, also involved in microtubule bundling and stabilization of existing microtubules, thereby maintaining the integrity of the microtubule network. Regulates microtubule dynamics by promoting tubulin acetylation: acts by inhibiting the tubulin deacetylase activity of HDAC6. Also regulates cell migration: phosphorylation by ROCK1 inhibits interaction with HDAC6, resulting in decreased acetylation of tubulin and increased cell motility. Plays a role in cell proliferation by regulating the G1/S-phase transition. Involved in astral microtubule organization and mitotic spindle orientation during early stage of mitosis; this process is regulated by phosphorylation by LIMK2. The polypeptide is Tubulin polymerization-promoting protein (Rattus norvegicus (Rat)).